A 304-amino-acid polypeptide reads, in one-letter code: Cell surface-binding protein OPG105 (304 aa).

Residues 1–235 (MPQQLSPINI…NDDTQVYYSG (235 aa)) form the Alpha-carbonic anhydrase domain. The Virion surface portion of the chain corresponds to 1-275 (MPQQLSPINI…YQKYIEGNKT (275 aa)). A helical membrane pass occupies residues 276-294 (FAIIAIVFVFILTAILFFM). Residues 295 to 304 (SQRYSREKQN) lie on the Intravirion side of the membrane.

The protein belongs to the alpha-carbonic anhydrase family. Homodimer; disulfide-linked. Apparently non-glycosylated.

It is found in the virion membrane. In terms of biological role, binds to chondroitin sulfate on the cell surface to provide virion attachment to target cell. This is Cell surface-binding protein OPG105 (OPG105) from Vaccinia virus (strain Ankara) (VACV).